A 252-amino-acid chain; its full sequence is 2-succinyl-6-hydroxy-2,4-cyclohexadiene-1-carboxylate synthase (252 aa).

The protein belongs to the AB hydrolase superfamily. MenH family. Monomer.

It catalyses the reaction 5-enolpyruvoyl-6-hydroxy-2-succinyl-cyclohex-3-ene-1-carboxylate = (1R,6R)-6-hydroxy-2-succinyl-cyclohexa-2,4-diene-1-carboxylate + pyruvate. Its pathway is quinol/quinone metabolism; 1,4-dihydroxy-2-naphthoate biosynthesis; 1,4-dihydroxy-2-naphthoate from chorismate: step 3/7. It functions in the pathway quinol/quinone metabolism; menaquinone biosynthesis. Its function is as follows. Catalyzes a proton abstraction reaction that results in 2,5-elimination of pyruvate from 2-succinyl-5-enolpyruvyl-6-hydroxy-3-cyclohexene-1-carboxylate (SEPHCHC) and the formation of 2-succinyl-6-hydroxy-2,4-cyclohexadiene-1-carboxylate (SHCHC). The chain is 2-succinyl-6-hydroxy-2,4-cyclohexadiene-1-carboxylate synthase from Escherichia coli O17:K52:H18 (strain UMN026 / ExPEC).